A 507-amino-acid polypeptide reads, in one-letter code: MTLAVMLQGTASDVGKSVLVAGLCRIFHQDGLRTAPFKSQNMALNSGITPDGKEMGRAQIFQAEAAGIAPDVRMNPILLKPTSDRQAQVVLMGQVATSMDAVSYHQYKPRLREQILAVYQSLAGEYEALVLEGAGSPAEINLRDRDIVNMGMAEMAQCPVILVADIDRGGVFAAIYGTLALLQPQERARVKGVIINKFRGDVALLRSGIEQIEALTGVPVLGVMPWLDVDLEDEDGVALQAGKYHRTDRRDIDIAVVHLPHIANFTDFNALAAQPDVRVRYVRDPQALADADLVILPGSKNTLGDLCWLRESGMAHAVEQARQRKVPLLGICGGYQMLGETIIDEVESGLGTQPGLGVLKTVTHFAQHKTTTQVQATLGTNLPEWLADAAGLHVSGYEIHMGETRREAGSPPLLQLHKAGQSVEDGAISDDGLAFGTYLHGLFDSDAFTRALLNGLRQRKGLAPLDSALEYARYKTRQFDRLADAMREHIAIDKIYAIMRQHQEPLC.

The GATase cobBQ-type domain occupies aspartate 251–phenylalanine 448. Cysteine 332 functions as the Nucleophile in the catalytic mechanism. Histidine 440 is a catalytic residue.

The protein belongs to the CobB/CobQ family. CobQ subfamily.

It participates in cofactor biosynthesis; adenosylcobalamin biosynthesis. Its function is as follows. Catalyzes amidations at positions B, D, E, and G on adenosylcobyrinic A,C-diamide. NH(2) groups are provided by glutamine, and one molecule of ATP is hydrogenolyzed for each amidation. The sequence is that of Cobyric acid synthase from Klebsiella pneumoniae (strain 342).